A 400-amino-acid chain; its full sequence is NADH-ubiquinone oxidoreductase 49 kDa subunit (400 aa).

This sequence belongs to the complex I 49 kDa subunit family.

It localises to the mitochondrion. It carries out the reaction a ubiquinone + NADH + 5 H(+)(in) = a ubiquinol + NAD(+) + 4 H(+)(out). In terms of biological role, core subunit of the mitochondrial membrane respiratory chain NADH dehydrogenase (Complex I) that is believed to belong to the minimal assembly required for catalysis. Complex I functions in the transfer of electrons from NADH to the respiratory chain. The immediate electron acceptor for the enzyme is believed to be ubiquinone. Component of the iron-sulfur (IP) fragment of the enzyme. Component of the iron-sulfur (IP) fragment of the enzyme. This is NADH-ubiquinone oxidoreductase 49 kDa subunit (NAD7) from Prototheca wickerhamii.